The chain runs to 285 residues: Diaminopimelate epimerase (285 aa).

Asn11 and Asn62 together coordinate substrate. The active-site Proton donor is Cys71. Substrate contacts are provided by residues 72–73 (GN), Asn167, Asn200, and 218–219 (ER). The Proton acceptor role is filled by Cys227. 228 to 229 (GT) contacts substrate.

It belongs to the diaminopimelate epimerase family. In terms of assembly, homodimer.

The protein resides in the cytoplasm. It carries out the reaction (2S,6S)-2,6-diaminopimelate = meso-2,6-diaminopimelate. Its pathway is amino-acid biosynthesis; L-lysine biosynthesis via DAP pathway; DL-2,6-diaminopimelate from LL-2,6-diaminopimelate: step 1/1. In terms of biological role, catalyzes the stereoinversion of LL-2,6-diaminopimelate (L,L-DAP) to meso-diaminopimelate (meso-DAP), a precursor of L-lysine and an essential component of the bacterial peptidoglycan. This is Diaminopimelate epimerase from Agathobacter rectalis (strain ATCC 33656 / DSM 3377 / JCM 17463 / KCTC 5835 / VPI 0990) (Eubacterium rectale).